A 606-amino-acid chain; its full sequence is Transmembrane 9 superfamily member 1 (606 aa).

The signal sequence occupies residues 1 to 27; it reads MTVVGNPRSWSCRWLPILILLLGTGHG. An N-linked (GlcNAc...) asparagine glycan is attached at N178. 4 consecutive transmembrane segments (helical) span residues 237–257, 310–330, 339–359, and 373–393; these read LSIINSMVLVFLLVGFVAVIL, VLGVGAQFLALGTGIIVMALL, GAINSAAILLYALTCCISGYV, and VWNIILTTSLFSVPFFLTWSV. N-linked (GlcNAc...) asparagine glycosylation occurs at N401. 4 consecutive transmembrane segments (helical) span residues 412–432, 469–489, 499–519, and 535–555; these read ILLLLTVWLLVGFPLTVIGGI, VGGFLPFSAISVELYYIFATV, GILFFVFAILLSVGACISIAL, and SVLSVGSTGLFIFLYSVFYYA. A glycan (N-linked (GlcNAc...) asparagine) is linked at N559. Residues 570–590 traverse the membrane as a helical segment; it reads FGYSLLTGYVFFLMLGTISFF.

This sequence belongs to the nonaspanin (TM9SF) (TC 9.A.2) family.

It is found in the lysosome membrane. The protein resides in the cytoplasmic vesicle. Its subcellular location is the autophagosome membrane. Functionally, plays an essential role in autophagy. In Pongo abelii (Sumatran orangutan), this protein is Transmembrane 9 superfamily member 1 (TM9SF1).